The sequence spans 248 residues: Coproheme decarboxylase (248 aa).

Fe-coproporphyrin III is bound by residues Arg130, 144-148 (YPMDK), His171, Gln184, and Ser222. Tyr144 is a catalytic residue.

The protein belongs to the ChdC family. Type 1 subfamily. In terms of assembly, homopentamer. It depends on Fe-coproporphyrin III as a cofactor.

The enzyme catalyses Fe-coproporphyrin III + 2 H2O2 + 2 H(+) = heme b + 2 CO2 + 4 H2O. It carries out the reaction Fe-coproporphyrin III + H2O2 + H(+) = harderoheme III + CO2 + 2 H2O. The catalysed reaction is harderoheme III + H2O2 + H(+) = heme b + CO2 + 2 H2O. The protein operates within porphyrin-containing compound metabolism; protoheme biosynthesis. Involved in coproporphyrin-dependent heme b biosynthesis. Catalyzes the decarboxylation of Fe-coproporphyrin III (coproheme) to heme b (protoheme IX), the last step of the pathway. The reaction occurs in a stepwise manner with a three-propionate intermediate. In Geobacillus kaustophilus (strain HTA426), this protein is Coproheme decarboxylase.